Consider the following 565-residue polypeptide: Translation machinery-associated protein 64 (565 aa).

One can recognise a PUA domain in the interval 89 to 170 (LPIVLTHGFV…VAVKIIHHFN (82 aa)). Positions 362–447 (TLYKPFNLAK…GEILHPLLTN (86 aa)) constitute an SWIB/MDM2 domain. The SUI1 domain maps to 475-547 (IKIITEMKIG…SIIDHLNKLG (73 aa)).

This sequence belongs to the eIF2D family. In terms of assembly, interacts with the 40S ribosomal subunit.

The protein is Translation machinery-associated protein 64 (TMA64) of Saccharomyces cerevisiae (strain ATCC 204508 / S288c) (Baker's yeast).